We begin with the raw amino-acid sequence, 241 residues long: Leucyl/phenylalanyl-tRNA--protein transferase (241 aa).

The protein belongs to the L/F-transferase family.

The protein resides in the cytoplasm. The catalysed reaction is N-terminal L-lysyl-[protein] + L-leucyl-tRNA(Leu) = N-terminal L-leucyl-L-lysyl-[protein] + tRNA(Leu) + H(+). It catalyses the reaction N-terminal L-arginyl-[protein] + L-leucyl-tRNA(Leu) = N-terminal L-leucyl-L-arginyl-[protein] + tRNA(Leu) + H(+). It carries out the reaction L-phenylalanyl-tRNA(Phe) + an N-terminal L-alpha-aminoacyl-[protein] = an N-terminal L-phenylalanyl-L-alpha-aminoacyl-[protein] + tRNA(Phe). In terms of biological role, functions in the N-end rule pathway of protein degradation where it conjugates Leu, Phe and, less efficiently, Met from aminoacyl-tRNAs to the N-termini of proteins containing an N-terminal arginine or lysine. The sequence is that of Leucyl/phenylalanyl-tRNA--protein transferase from Colwellia psychrerythraea (strain 34H / ATCC BAA-681) (Vibrio psychroerythus).